A 298-amino-acid polypeptide reads, in one-letter code: Protease HtpX homolog (298 aa).

2 consecutive transmembrane segments (helical) span residues 14 to 34 (VVLLVVFFALLALIGASAGYL) and 39 to 59 (YAMGLVLALVIGVIYATSMIF). Residue histidine 143 coordinates Zn(2+). The active site involves glutamate 144. Zn(2+) is bound at residue histidine 147. 2 helical membrane-spanning segments follow: residues 158–178 (IAVALASAVTVISSIGGRMLW) and 197–217 (IITLLLSLLSLLLAPLVASLI). Glutamate 226 serves as a coordination point for Zn(2+).

Belongs to the peptidase M48B family. The cofactor is Zn(2+).

The protein localises to the cell membrane. This chain is Protease HtpX homolog, found in Streptococcus pyogenes serotype M28 (strain MGAS6180).